The primary structure comprises 349 residues: UDP-3-O-acylglucosamine N-acyltransferase (349 aa).

The active-site Proton acceptor is the His-243.

Belongs to the transferase hexapeptide repeat family. LpxD subfamily. Homotrimer.

The catalysed reaction is a UDP-3-O-[(3R)-3-hydroxyacyl]-alpha-D-glucosamine + a (3R)-hydroxyacyl-[ACP] = a UDP-2-N,3-O-bis[(3R)-3-hydroxyacyl]-alpha-D-glucosamine + holo-[ACP] + H(+). Its pathway is bacterial outer membrane biogenesis; LPS lipid A biosynthesis. Catalyzes the N-acylation of UDP-3-O-acylglucosamine using 3-hydroxyacyl-ACP as the acyl donor. Is involved in the biosynthesis of lipid A, a phosphorylated glycolipid that anchors the lipopolysaccharide to the outer membrane of the cell. The chain is UDP-3-O-acylglucosamine N-acyltransferase from Myxococcus xanthus (strain DK1622).